Consider the following 201-residue polypeptide: Recombination protein RecR (201 aa).

A C4-type zinc finger spans residues 59 to 74 (CKICGNIDTENICRIC). A Toprim domain is found at 82–177 (SIIAIVETVA…KISRLASGIP (96 aa)).

This sequence belongs to the RecR family.

Functionally, may play a role in DNA repair. It seems to be involved in an RecBC-independent recombinational process of DNA repair. It may act with RecF and RecO. This is Recombination protein RecR from Rickettsia massiliae (strain Mtu5).